The chain runs to 166 residues: Endoribonuclease YbeY (166 aa).

Zn(2+) contacts are provided by His132, His136, and His142.

This sequence belongs to the endoribonuclease YbeY family. Zn(2+) serves as cofactor.

The protein resides in the cytoplasm. In terms of biological role, single strand-specific metallo-endoribonuclease involved in late-stage 70S ribosome quality control and in maturation of the 3' terminus of the 16S rRNA. The polypeptide is Endoribonuclease YbeY (Clostridium botulinum (strain Kyoto / Type A2)).